Consider the following 30-residue polypeptide: Mycofactocin precursor peptide (30 aa).

The protein belongs to the mycofactocin precursor peptide family. In terms of assembly, interacts with MftB. In terms of processing, the post-translational modifications that lead to mycofactocin involve oxidative decarboxylation of the C-terminal tyrosine residue catalyzed by MftC, introduction of a tyramine-valine cross-link, removal of the modified C-terminal dipeptide by MftE. The released dipeptide then undergoes oxidative deamination by MftD, glycosylation by MftF and methylation by an unknown enzyme.

Its function is as follows. Precursor peptide that leads to mycofactocin (MFT) after extensive post-translational modifications by enzymes encoded by adjacent genes. Mycofactocin acts as a redox cofactor of nicotinamide-dependent oxidoreductases encoded in the same locus. This chain is Mycofactocin precursor peptide, found in Mycobacterium ulcerans (strain Agy99).